We begin with the raw amino-acid sequence, 764 residues long: 5-methyltetrahydropteroyltriglutamate--homocysteine methyltransferase (764 aa).

5-methyltetrahydropteroyltri-L-glutamate is bound by residues 16-19 (RELK) and Lys121. L-homocysteine is bound by residues 440–442 (IGS) and Glu493. L-methionine is bound by residues 440-442 (IGS) and Glu493. Residues 524 to 525 (RC) and Trp570 contribute to the 5-methyltetrahydropteroyltri-L-glutamate site. Residue Asp608 coordinates L-homocysteine. Asp608 contacts L-methionine. Glu614 provides a ligand contact to 5-methyltetrahydropteroyltri-L-glutamate. 3 residues coordinate Zn(2+): His650, Cys652, and Glu674. The Proton donor role is filled by His703. Cys735 contributes to the Zn(2+) binding site.

This sequence belongs to the vitamin-B12 independent methionine synthase family. Zn(2+) is required as a cofactor.

The enzyme catalyses 5-methyltetrahydropteroyltri-L-glutamate + L-homocysteine = tetrahydropteroyltri-L-glutamate + L-methionine. It functions in the pathway amino-acid biosynthesis; L-methionine biosynthesis via de novo pathway; L-methionine from L-homocysteine (MetE route): step 1/1. Catalyzes the transfer of a methyl group from 5-methyltetrahydrofolate to homocysteine resulting in methionine formation. This chain is 5-methyltetrahydropteroyltriglutamate--homocysteine methyltransferase, found in Burkholderia ambifaria (strain MC40-6).